Here is a 543-residue protein sequence, read N- to C-terminus: CTP synthase (543 aa).

Positions 1-265 are amidoligase domain; it reads MARYIFITGG…DDEVLAAFAI (265 aa). Ser13 serves as a coordination point for CTP. Ser13 provides a ligand contact to UTP. 14–19 is a binding site for ATP; the sequence is SLGKGL. Residue Tyr54 participates in L-glutamine binding. An ATP-binding site is contributed by Asp71. 2 residues coordinate Mg(2+): Asp71 and Glu139. CTP is bound by residues 146-148, 186-191, and Lys222; these read DIE and KTKPTQ. Residues 186–191 and Lys222 each bind UTP; that span reads KTKPTQ. 238-240 lines the ATP pocket; the sequence is RDA. Residues 291-542 form the Glutamine amidotransferase type-1 domain; it reads TIAIVGKYTG…IEAALVRSRL (252 aa). Gly353 is a binding site for L-glutamine. Cys380 acts as the Nucleophile; for glutamine hydrolysis in catalysis. L-glutamine is bound by residues 381–384, Glu404, and Arg470; that span reads FGMQ. Residues His515 and Glu517 contribute to the active site.

Belongs to the CTP synthase family. Homotetramer.

It catalyses the reaction UTP + L-glutamine + ATP + H2O = CTP + L-glutamate + ADP + phosphate + 2 H(+). It carries out the reaction L-glutamine + H2O = L-glutamate + NH4(+). The catalysed reaction is UTP + NH4(+) + ATP = CTP + ADP + phosphate + 2 H(+). It functions in the pathway pyrimidine metabolism; CTP biosynthesis via de novo pathway; CTP from UDP: step 2/2. Its activity is regulated as follows. Allosterically activated by GTP, when glutamine is the substrate; GTP has no effect on the reaction when ammonia is the substrate. The allosteric effector GTP functions by stabilizing the protein conformation that binds the tetrahedral intermediate(s) formed during glutamine hydrolysis. Inhibited by the product CTP, via allosteric rather than competitive inhibition. Catalyzes the ATP-dependent amination of UTP to CTP with either L-glutamine or ammonia as the source of nitrogen. Regulates intracellular CTP levels through interactions with the four ribonucleotide triphosphates. The polypeptide is CTP synthase (Rhodopseudomonas palustris (strain BisB5)).